The sequence spans 443 residues: tRNA-2-methylthio-N(6)-dimethylallyladenosine synthase (443 aa).

Residues 1–114 enclose the MTTase N-terminal domain; that stretch reads MRFYIKTFGC…VTEAVKRALQ (114 aa). [4Fe-4S] cluster-binding residues include cysteine 10, cysteine 46, cysteine 79, cysteine 150, cysteine 154, and cysteine 157. Residues 136–367 form the Radical SAM core domain; it reads RSSKHHAWVT…MNLQKRINRK (232 aa). The TRAM domain maps to 370-431; the sequence is ERYKGKTVRV…AGPLYGKVVW (62 aa).

The protein belongs to the methylthiotransferase family. MiaB subfamily. As to quaternary structure, monomer. [4Fe-4S] cluster is required as a cofactor.

The protein localises to the cytoplasm. It carries out the reaction N(6)-dimethylallyladenosine(37) in tRNA + (sulfur carrier)-SH + AH2 + 2 S-adenosyl-L-methionine = 2-methylsulfanyl-N(6)-dimethylallyladenosine(37) in tRNA + (sulfur carrier)-H + 5'-deoxyadenosine + L-methionine + A + S-adenosyl-L-homocysteine + 2 H(+). In terms of biological role, catalyzes the methylthiolation of N6-(dimethylallyl)adenosine (i(6)A), leading to the formation of 2-methylthio-N6-(dimethylallyl)adenosine (ms(2)i(6)A) at position 37 in tRNAs that read codons beginning with uridine. The sequence is that of tRNA-2-methylthio-N(6)-dimethylallyladenosine synthase from Thermotoga sp. (strain RQ2).